A 507-amino-acid polypeptide reads, in one-letter code: Xylose import ATP-binding protein XylG (507 aa).

ABC transporter domains are found at residues 5-242 and 259-504; these read LKMT…VGRE and LEVK…LSEK. 37 to 44 lines the ATP pocket; it reads GENGSGKS.

This sequence belongs to the ABC transporter superfamily. Xylose importer (TC 3.A.1.2.4) family. As to quaternary structure, the complex is composed of two ATP-binding proteins (XylG), two transmembrane proteins (XylH) and a solute-binding protein (XylF).

It localises to the cell inner membrane. The catalysed reaction is D-xylose(out) + ATP + H2O = D-xylose(in) + ADP + phosphate + H(+). In terms of biological role, part of the ABC transporter complex XylFGH involved in xylose import. Responsible for energy coupling to the transport system. This Photobacterium profundum (strain SS9) protein is Xylose import ATP-binding protein XylG.